Reading from the N-terminus, the 301-residue chain is Nucleosome assembly protein 1;3 (301 aa).

Positions 15 to 69 (VETLKNKLQALAEQHVDVLESLAPVVRKRVDVLIEIQSQHDELEAKFLEEKSALE) form a coiled coil. A Nuclear export signal motif is present at residues 36–51 (LAPVVRKRVDVLIEIQ). The interval 279 to 301 (EDYGASWVDDEEDDDDEYSDEEA) is disordered. Residue Ser-297 is modified to Phosphoserine; by CK2.

The protein belongs to the nucleosome assembly protein (NAP) family.

The protein resides in the nucleus. It is found in the cytoplasm. May modulate chromatin structure by regulation of nucleosome assembly/disassembly. The protein is Nucleosome assembly protein 1;3 (NAP1;3) of Oryza sativa subsp. indica (Rice).